We begin with the raw amino-acid sequence, 149 residues long: Arginine repressor (149 aa).

The protein belongs to the ArgR family.

It is found in the cytoplasm. It functions in the pathway amino-acid biosynthesis; L-arginine biosynthesis [regulation]. Regulates arginine biosynthesis genes. The polypeptide is Arginine repressor (Halalkalibacterium halodurans (strain ATCC BAA-125 / DSM 18197 / FERM 7344 / JCM 9153 / C-125) (Bacillus halodurans)).